The sequence spans 417 residues: Probable secreted beta-glucosidase PSU1 (417 aa).

Residues 1–18 (MRFFETLALALLTTGALA) form the signal peptide.

This sequence belongs to the SUN family.

It localises to the secreted. The protein localises to the cell wall. Functionally, involved in cell wall synthesis. May be required for the activation of 1,3-beta-glucan synthase. This is Probable secreted beta-glucosidase PSU1 (psu1) from Schizosaccharomyces pombe (strain 972 / ATCC 24843) (Fission yeast).